The sequence spans 225 residues: NAD(P)H-quinone oxidoreductase subunit K, chloroplastic (225 aa).

[4Fe-4S] cluster contacts are provided by cysteine 43, cysteine 44, cysteine 108, and cysteine 139.

This sequence belongs to the complex I 20 kDa subunit family. NDH is composed of at least 16 different subunits, 5 of which are encoded in the nucleus. The cofactor is [4Fe-4S] cluster.

The protein localises to the plastid. Its subcellular location is the chloroplast thylakoid membrane. The catalysed reaction is a plastoquinone + NADH + (n+1) H(+)(in) = a plastoquinol + NAD(+) + n H(+)(out). It catalyses the reaction a plastoquinone + NADPH + (n+1) H(+)(in) = a plastoquinol + NADP(+) + n H(+)(out). Functionally, NDH shuttles electrons from NAD(P)H:plastoquinone, via FMN and iron-sulfur (Fe-S) centers, to quinones in the photosynthetic chain and possibly in a chloroplast respiratory chain. The immediate electron acceptor for the enzyme in this species is believed to be plastoquinone. Couples the redox reaction to proton translocation, and thus conserves the redox energy in a proton gradient. The protein is NAD(P)H-quinone oxidoreductase subunit K, chloroplastic of Eucalyptus globulus subsp. globulus (Tasmanian blue gum).